The sequence spans 282 residues: Nucleotide-binding protein Ping_2894 (282 aa).

ATP is bound at residue 8–15 (GRSGSGKT). A GTP-binding site is contributed by 56-59 (DIRN).

This sequence belongs to the RapZ-like family.

In terms of biological role, displays ATPase and GTPase activities. The chain is Nucleotide-binding protein Ping_2894 from Psychromonas ingrahamii (strain DSM 17664 / CCUG 51855 / 37).